Consider the following 968-residue polypeptide: Insulin receptor substrate 1 (968 aa).

The PH domain maps to 8-109 (GMALSGYLKK…WLDKLLVLQR (102 aa)). Residues 122-236 (YDHVWQVVIQ…SAMSAKTESN (115 aa)) enclose the IRS-type PTB domain. The segment at 248–269 (DLSHEPMRKRSSSANEASKPIN) is disordered. 2 positions are modified to phosphoserine: S286 and S287. Positions 304-329 (RNGTLSESSNQTYFGSNHGLRSNTIS) are enriched in polar residues. The disordered stretch occupies residues 304–370 (RNGTLSESSN…VDESDDNGSF (67 aa)). S342 is subject to Phosphoserine. Phosphotyrosine; by INSR is present on Y411. A YXXM motif 1 motif is present at residues 411 to 414 (YIPM). The disordered stretch occupies residues 528–555 (TANRSQSSITKEGTSYGSSANRQKKSTS). Residues 529–555 (ANRSQSSITKEGTSYGSSANRQKKSTS) are compositionally biased toward polar residues. Position 555 is a phosphoserine (S555). The YXXM motif 2 motif lies at 641 to 644 (YLEM). Positions 697 to 711 (EKWREQPSRSEEKKS) are enriched in basic and acidic residues. The segment at 697 to 739 (EKWREQPSRSEEKKSNSPLNDNTFSSKPTNVESTSKSHDVHSA) is disordered. Polar residues predominate over residues 712 to 730 (NSPLNDNTFSSKPTNVEST). Y911 carries the phosphotyrosine; by INSR modification. The disordered stretch occupies residues 922 to 968 (QNPAKYLKRGSRESPPVSACPEDGNTYAKIDFDQSDSSSSSSNIFNT). Phosphoserine occurs at positions 932 and 935. Y948 carries the phosphotyrosine; by INSR modification. Residues 956–968 (SDSSSSSSNIFNT) are compositionally biased toward low complexity.

In terms of assembly, bindings to phosphatidylinositol 3-kinase and SHP2.

Activates phosphatidylinositol 3-kinase when bound to the regulatory p85 subunit. May mediate the control of various cellular processes by insulin-like peptides. When phosphorylated by the insulin receptor binds specifically to various cellular proteins containing SH2 domains. Involved in control of cell proliferation, cell size, and body and organ growth throughout development. Also has a role in a signaling pathway controlling the physiological response required to endure periods of low nutrient conditions. Insulin/insulin-like growth factor (IGF) signaling pathway has a role in regulating aging and is necessary in the ovary for vitellogenic maturation. The polypeptide is Insulin receptor substrate 1 (chico) (Drosophila melanogaster (Fruit fly)).